Reading from the N-terminus, the 146-residue chain is Hemoglobin subunit beta (146 aa).

The Globin domain maps to 2–146 (HWTAEEKQLI…VAHALARKYH (145 aa)). Positions 63 and 92 each coordinate heme b.

It belongs to the globin family. As to quaternary structure, heterotetramer of two alpha chains and two beta chains. Red blood cells.

Its function is as follows. Involved in oxygen transport from the lung to the various peripheral tissues. This is Hemoglobin subunit beta (HBB) from Branta canadensis (Canada goose).